Here is a 174-residue protein sequence, read N- to C-terminus: Cytochrome c-550-like protein (174 aa).

The signal sequence occupies residues 1–37 (MPGQTQGAKRWRVPGRGWRWAGILLLVWLGLASPAAG). Residues Cys82, Cys85, His86, and Cys136 each contribute to the heme c site.

The protein belongs to the cytochrome c family. PsbV subfamily. Heme c serves as cofactor.

The protein localises to the cellular thylakoid membrane. Functionally, possible low-potential cytochrome c. The polypeptide is Cytochrome c-550-like protein (psbV2) (Synechococcus sp. (strain JA-3-3Ab) (Cyanobacteria bacterium Yellowstone A-Prime)).